The primary structure comprises 356 residues: Popeye domain-containing protein 1 (356 aa).

Over 1-48 the chain is Extracellular; sequence MNFTEPSPLAQSTVVGFLPELESLTPVPSNETSCENWREVHHLVFHAA. N-linked (GlcNAc...) asparagine glycans are attached at residues Asn-2 and Asn-30. The helical transmembrane segment at 49-69 threads the bilayer; it reads NVCFAVGLLIPTTLHLHMILL. A topological domain (cytoplasmic) is located at residue Arg-70. Residues 71–91 form a helical membrane-spanning segment; sequence VMLSIGCTLYVVWATLYRCAL. A topological domain (extracellular) is located at residue Asp-92. Residues 93–113 form a helical membrane-spanning segment; it reads MMIWNSVFLGINILHLSYLLY. Residues 93-115 form a required for interaction with CAV3 region; sequence MMIWNSVFLGINILHLSYLLYKK. Residues 114–356 are Cytoplasmic-facing; that stretch reads KKRPVKIEKD…VPVSPAHQLP (243 aa). Residues 136–186 are required for interaction with KCNK2; sequence RVPPDLFRRLTGQFCVIQTLKRGQVYATEDKTSVDDRLSILLKGRMKVSYR. A phosphoserine mark is found at Ser-295 and Ser-318. A compositionally biased stretch (low complexity) spans 313 to 323; it reads SSSTASLPMSS. A disordered region spans residues 313–356; it reads SSSTASLPMSSPQQRASPKMKPIEEGLEDDDEVFVPVSPAHQLP.

The protein belongs to the popeye family. In terms of assembly, homodimer. Homodimerization requires the C-terminus cytoplasmic region. Interacts (via the C-terminus cytoplasmic tail) with TJP1. Interacts (via the C-terminus cytoplasmic tail) with ARHGEF25/GEFT (via the DH domain). Interacts (via the C-terminus cytoplasmic tail) with VAMP3. Interacts with KCNK2; the interaction enhances KCNK2 surface expression and is inhibited by cAMP. Interacts with CAV3. As to expression, strongly expressed in heart and skeletal muscle. Weakly expressed in brain, spleen, liver, kidney and lung.

It localises to the lateral cell membrane. It is found in the cell junction. The protein localises to the tight junction. The protein resides in the membrane. Its subcellular location is the cell membrane. It localises to the sarcolemma. It is found in the caveola. Its function is as follows. Cell adhesion molecule involved in the establishment and/or maintenance of cell integrity. Involved in the formation and regulation of the tight junction (TJ) paracellular permeability barrier in epithelial cells. Plays a role in VAMP3-mediated vesicular transport and recycling of different receptor molecules through its interaction with VAMP3. Plays a role in the regulation of cell shape and movement by modulating the Rho-family GTPase activity through its interaction with ARHGEF25/GEFT. Induces primordial adhesive contact and aggregation of epithelial cells in a Ca(2+)-independent manner. Important for skeletal muscle and heart development. Also involved in striated muscle regeneration and repair and in the regulation of cell spreading. Important for the maintenance of cardiac function. Plays a regulatory function in heart rate dynamics mediated, at least in part, through cAMP-binding and, probably, by increasing cell surface expression of the potassium channel KCNK2 and enhancing current density. Is a caveolae-associated protein important for the preservation of caveolae structural and functional integrity as well as for heart protection against ischemia injury. This chain is Popeye domain-containing protein 1 (Popdc1), found in Rattus norvegicus (Rat).